Here is a 632-residue protein sequence, read N- to C-terminus: FAD-binding monooxygenase ausB (632 aa).

The segment at 1 to 50 (MASAPEVESVKTPDPASTKTQHTSIAEIHTADQTWNNESNTRLPPNHRHH) is disordered. 2 stretches are compositionally biased toward polar residues: residues 15 to 24 (PASTKTQHTS) and 31 to 43 (ADQT…NTRL). Residues 116-119 (TWYW), 128-129 (DI), and Tyr-134 each bind FAD. 126–128 (MCD) is a binding site for NADP(+). Residues 269 to 275 (TGSTAIQ) and 292 to 293 (RT) each bind NADP(+).

The protein belongs to the FAD-binding monooxygenase family. It depends on FAD as a cofactor.

The enzyme catalyses protoaustinoid A + AH2 + O2 = berkeleyone A + A + H2O. It functions in the pathway secondary metabolite biosynthesis; terpenoid biosynthesis. Functionally, FAD-binding monooxygenase; part of the gene cluster that mediates the biosynthesis of calidodehydroaustin, a fungal meroterpenoid. The first step of the pathway is the synthesis of 3,5-dimethylorsellinic acid by the polyketide synthase ausA. 3,5-dimethylorsellinic acid is then prenylated by the polyprenyl transferase ausN. Further epoxidation by the FAD-dependent monooxygenase ausM and cyclization by the probable terpene cyclase ausL lead to the formation of protoaustinoid A. Protoaustinoid A is then oxidized to spiro-lactone preaustinoid A3 by the combined action of the FAD-binding monooxygenases ausB and ausC, and the dioxygenase ausE. Acid-catalyzed keto-rearrangement and ring contraction of the tetraketide portion of preaustinoid A3 by ausJ lead to the formation of preaustinoid A4. The aldo-keto reductase ausK, with the help of ausH, is involved in the next step by transforming preaustinoid A4 into isoaustinone which is in turn hydroxylated by the P450 monooxygenase ausI to form austinolide. The cytochrome P450 monooxygenase ausG modifies austinolide to austinol. Austinol is further acetylated to austin by the O-acetyltransferase ausP, which spontaneously changes to dehydroaustin. The cytochrome P450 monooxygenase ausR then converts dehydroaustin is into 7-dehydrodehydroaustin. The hydroxylation catalyzed by ausR permits the O-acetyltransferase ausQ to add an additional acetyl group to the molecule, leading to the formation of acetoxydehydroaustin. The short chain dehydrogenase ausT catalyzes the reduction of the double bond present between carbon atoms 1 and 2 to convert 7-dehydrodehydroaustin into 1,2-dihydro-7-hydroxydehydroaustin. AusQ catalyzes not only an acetylation reaction but also the addition of the PKS ausV diketide product to 1,2-dihydro-7-hydroxydehydroaustin, forming precalidodehydroaustin. Finally, the iron/alpha-ketoglutarate-dependent dioxygenase converts precalidodehydroaustin into calidodehydroaustin. The polypeptide is FAD-binding monooxygenase ausB (Aspergillus calidoustus).